The chain runs to 534 residues: Monolignol oxidoreductase AtBBE-like 13 (534 aa).

A signal peptide spans 1–29 (MAFVLMNNTNAFLVTLLLLSLSYIPLSFS). Asn-7 and Asn-59 each carry an N-linked (GlcNAc...) asparagine glycan. Cys-38 and Cys-102 are joined by a disulfide. The segment at residues 117-181 (HDYEGLSYVS…KIHGFPAGLC (65 aa)) is a cross-link (6-(S-cysteinyl)-8alpha-(pros-histidyl)-FAD (His-Cys)).

It belongs to the oxygen-dependent FAD-linked oxidoreductase family. FAD serves as cofactor. The FAD cofactor is bound via a bicovalent 6-S-cysteinyl, 8alpha-N1-histidyl FAD linkage.

Its subcellular location is the secreted. The protein localises to the cell wall. The catalysed reaction is (E)-4-coumaroyl alcohol + A = (E)-4-coumaraldehyde + AH2. It catalyses the reaction (E)-coniferol + A = (E)-coniferaldehyde + AH2. It carries out the reaction (E)-sinapyl alcohol + A = (E)-sinapaldehyde + AH2. It functions in the pathway phenylpropanoid metabolism. Mediates oxidation of p-hydroxylated derivatives of cinnamyl alcohol (i.e. the monolignols p-coumaryl-, coniferyl-, and sinapyl alcohol) to their corresponding aldehydes. The electron acceptor required for these reactions is not known, but does not seem to be dioxygen. Is much less efficient towards cinnamyl alcohol. The polypeptide is Monolignol oxidoreductase AtBBE-like 13 (Arabidopsis thaliana (Mouse-ear cress)).